A 381-amino-acid chain; its full sequence is (S)-scoulerine 9-O-methyltransferase (381 aa).

Residues Gly-223, Glu-246, Asp-266, Met-267, and Lys-280 each contribute to the S-adenosyl-L-methionine site. His-284 acts as the Proton acceptor in catalysis.

It belongs to the class I-like SAM-binding methyltransferase superfamily. Cation-independent O-methyltransferase family. COMT subfamily.

It catalyses the reaction (S)-scoulerine + S-adenosyl-L-methionine = (S)-tetrahydrocolumbamine + S-adenosyl-L-homocysteine + H(+). Its function is as follows. Produces a precursor of protoberberine alkaloids. The chain is (S)-scoulerine 9-O-methyltransferase (SMT) from Coptis japonica (Japanese goldthread).